The following is a 62-amino-acid chain: Large ribosomal subunit protein bL33 (62 aa).

It belongs to the bacterial ribosomal protein bL33 family.

The polypeptide is Large ribosomal subunit protein bL33 (Bacteroides fragilis (strain ATCC 25285 / DSM 2151 / CCUG 4856 / JCM 11019 / LMG 10263 / NCTC 9343 / Onslow / VPI 2553 / EN-2)).